Consider the following 402-residue polypeptide: Plasminogen activator inhibitor 1 (402 aa).

The signal sequence occupies residues 1–23 (MQMSPALTCLVLGLALVFGEGSA). N-linked (GlcNAc...) asparagine glycosylation is found at Asn-232, Asn-288, and Asn-352.

Belongs to the serpin family. As to quaternary structure, forms a heterodimer with TMPRSS7. Interacts with VTN. Binds LRP1B; binding is followed by internalization and degradation. Interacts with PPP1CB. In complex with PLAU/uPA, interacts with PLAUR/uPAR. Interacts with SORL1 and LRP1, either alone or in complex with PLAU; these interactions are abolished in the presence of LRPAP1/RAP. The ternary complex composed of PLAUR-PLAU-PAI1 also interacts with SORL1. Interacts with PLAT/tPA. Also interacts with SORL1, when complexed to PLAT/tPA. Inactivated by proteolytic attack of the urokinase-type (u-PA) and the tissue-type (TPA), cleaving the 369-Arg-|-Met-370 bond. As to expression, expressed in endothelial cells. Found in plasma, platelets, and hepatoma and fibrosarcoma cells.

The protein localises to the secreted. Functionally, serine protease inhibitor. Inhibits TMPRSS7. Is a primary inhibitor of tissue-type plasminogen activator (PLAT) and urokinase-type plasminogen activator (PLAU). As PLAT inhibitor, it is required for fibrinolysis down-regulation and is responsible for the controlled degradation of blood clots. As PLAU inhibitor, it is involved in the regulation of cell adhesion and spreading. Acts as a regulator of cell migration, independently of its role as protease inhibitor. It is required for stimulation of keratinocyte migration during cutaneous injury repair. It is involved in cellular and replicative senescence. Plays a role in alveolar type 2 cells senescence in the lung. Is involved in the regulation of cementogenic differentiation of periodontal ligament stem cells, and regulates odontoblast differentiation and dentin formation during odontogenesis. This Homo sapiens (Human) protein is Plasminogen activator inhibitor 1 (SERPINE1).